The sequence spans 203 residues: Outer-membrane lipoprotein LolB (203 aa).

The N-terminal stretch at M1–G18 is a signal peptide. The N-palmitoyl cysteine moiety is linked to residue C19. Residue C19 is the site of S-diacylglycerol cysteine attachment.

It belongs to the LolB family. Monomer.

Its subcellular location is the cell outer membrane. Functionally, plays a critical role in the incorporation of lipoproteins in the outer membrane after they are released by the LolA protein. This chain is Outer-membrane lipoprotein LolB, found in Vibrio parahaemolyticus serotype O3:K6 (strain RIMD 2210633).